We begin with the raw amino-acid sequence, 331 residues long: PHD finger protein 11 (331 aa).

The C2HC pre-PHD-type zinc-finger motif lies at 42–78 (KRTCALCPKDVEYNVLYFAQSENIAAHENCLLYSSGL). A PHD-type zinc finger spans residues 108-160 (LKCKFCHKRGATVGCDLKNCNKNYHFFCAKKDDAVPQSDGVRGIYKLLCQQHA).

In terms of assembly, interacts with BRCA1 and RELA. In terms of tissue distribution, highly expressed in T and B-cells, as well as natural killer and mature dendritic cells. Expressed at higher levels in Th1 as compared to Th2 cells. Expressed at low levels in all normal tissues tested, including lung, testis, small intestine, breast, liver and placenta.

The protein localises to the nucleus. Positive regulator of Th1-type cytokine gene expression. In Homo sapiens (Human), this protein is PHD finger protein 11 (PHF11).